An 84-amino-acid chain; its full sequence is Small ribosomal subunit protein eS27 (84 aa).

Over residues 1-16 (MPLAKDLLHPTPEEEK) the composition is skewed to basic and acidic residues. The interval 1 to 23 (MPLAKDLLHPTPEEEKRKHKKKR) is disordered. The C4-type zinc-finger motif lies at 37-59 (CPGCYKITTVFSHAQTVVLCVGC).

This sequence belongs to the eukaryotic ribosomal protein eS27 family. In terms of assembly, component of the small ribosomal subunit. Part of the small subunit (SSU) processome, composed of more than 70 proteins and the RNA chaperone small nucleolar RNA (snoRNA) U3. Requires Zn(2+) as cofactor.

The protein localises to the cytoplasm. It is found in the nucleus. It localises to the nucleolus. In terms of biological role, component of the small ribosomal subunit. The ribosome is a large ribonucleoprotein complex responsible for the synthesis of proteins in the cell. Required for proper rRNA processing and maturation of 18S rRNAs. Part of the small subunit (SSU) processome, first precursor of the small eukaryotic ribosomal subunit. During the assembly of the SSU processome in the nucleolus, many ribosome biogenesis factors, an RNA chaperone and ribosomal proteins associate with the nascent pre-rRNA and work in concert to generate RNA folding, modifications, rearrangements and cleavage as well as targeted degradation of pre-ribosomal RNA by the RNA exosome. In Xenopus laevis (African clawed frog), this protein is Small ribosomal subunit protein eS27 (rps27).